A 370-amino-acid polypeptide reads, in one-letter code: MSHPSPQAKPSNPSNPRVFFDVDIGGERVGRIVLELFADIVPKTAENFRALCTGEKGIGPTTGKPLHFKGCPFHRIIKKFMIQGGDFSNQNGTGGESIYGEKFEDENFHYKHDKEGLLSMANAGSNTNGSQFFITTVPTPHLDGKHVVFGQVIKGMGVAKILENVEVKGEKPAKLCVIAECGELKEGDDWGIFPKDGSGDSHPDFPEDADVDLKDVDKILLISEDLKNIGNTFFKSQNWEMAIKKYTKVLRYVEGSRAAAEDADGAKLQPVALSCVLNIGACKLKMSDWQGAVDSCLEALEIDPSNTKALYRRAQGWQGLKEYDQALADLKKAQEIAPEDKAIQAELLKVKQKIKAQKDKEKAAYAKMFA.

S5 carries the phosphoserine modification. Residues F19 to E183 enclose the PPIase cyclophilin-type domain. K171 carries the post-translational modification N6-acetyllysine. The chaperone activity stretch occupies residues K185–D215. Position 198 is a phosphoserine (S198). Residues K214–A370 are interaction with HSP90AB1. 3 TPR repeats span residues S223–S256, L273–N306, and T307–D340.

Belongs to the cyclophilin-type PPIase family. PPIase D subfamily. As to quaternary structure, identified in ESR1 or NR3C1/GCR steroid receptor-chaperone complexes. Found in HSP90 chaperone complexes with kinase clients LCK or EIF2AK1. Two monomers associate with one HSP90 homodimer. Interacts with HSP90AA1. Interacts with HSP90AB1; PPID and FKBP4 compete for binding to HSP90AB1 and the interaction is mutually exclusive with the PPID:HSPA8 interaction. Interacts with HSPA8; PPID and STIP1 but not FKBP4 compete for binding to HSPA8 and the interaction is mutually exclusive with the PPID:HSP90AB1 interaction. Interacts with S100A1 and S100A2; the interactions dissociate the PPID:HSP90AA1 interaction. Interacts with S100A6. Interacts with MYB, ILF2, XRCC6, RACK1 and RPS3. Interacts with cytoplasmic dynein 1 intermediate chain (DYNC1I1 or DYNC1I2). The N-terminus is blocked. Detected in heart, thymis and brain.

Its subcellular location is the cytoplasm. The protein resides in the nucleus. It is found in the nucleolus. It localises to the nucleoplasm. It catalyses the reaction [protein]-peptidylproline (omega=180) = [protein]-peptidylproline (omega=0). Its activity is regulated as follows. Less sensitive to inhibition by cyclosporin A than is CYP-18. Its function is as follows. PPIase that catalyzes the cis-trans isomerization of proline imidic peptide bonds in oligopeptides and may therefore assist protein folding. Proposed to act as a co-chaperone in HSP90 complexes such as in unligated steroid receptors heterocomplexes. Different co-chaperones seem to compete for association with HSP90 thus establishing distinct HSP90-co-chaperone-receptor complexes with the potential to exert tissue-specific receptor activity control. May have a preference for estrogen receptor complexes and is not found in glucocorticoid receptor complexes. May be involved in cytoplasmic dynein-dependent movement of the receptor from the cytoplasm to the nucleus. May regulate MYB by inhibiting its DNA-binding activity. Involved in regulation of AHR signaling by promoting the formation of the AHR:ARNT dimer; the function is independent of HSP90 but requires the chaperone activity. Involved in regulation of UV radiation-induced apoptosis. The protein is Peptidyl-prolyl cis-trans isomerase D of Bos taurus (Bovine).